A 255-amino-acid chain; its full sequence is Adenosylcobinamide-GDP ribazoletransferase (255 aa).

6 helical membrane passes run 24-44 (LIAY…SLYV), 45-65 (AIYG…IYIV), 98-118 (VGAG…ISLS), 122-142 (LYIG…MMMI), 164-184 (KHDS…ALLS), and 187-207 (SIMI…MAVI).

This sequence belongs to the CobS family. The cofactor is Mg(2+).

Its subcellular location is the cell membrane. It catalyses the reaction alpha-ribazole + adenosylcob(III)inamide-GDP = adenosylcob(III)alamin + GMP + H(+). The enzyme catalyses alpha-ribazole 5'-phosphate + adenosylcob(III)inamide-GDP = adenosylcob(III)alamin 5'-phosphate + GMP + H(+). The protein operates within cofactor biosynthesis; adenosylcobalamin biosynthesis; adenosylcobalamin from cob(II)yrinate a,c-diamide: step 7/7. Joins adenosylcobinamide-GDP and alpha-ribazole to generate adenosylcobalamin (Ado-cobalamin). Also synthesizes adenosylcobalamin 5'-phosphate from adenosylcobinamide-GDP and alpha-ribazole 5'-phosphate. In Thermoplasma acidophilum (strain ATCC 25905 / DSM 1728 / JCM 9062 / NBRC 15155 / AMRC-C165), this protein is Adenosylcobinamide-GDP ribazoletransferase.